Consider the following 286-residue polypeptide: Pyridoxal kinase PdxY (286 aa).

Substrate-binding positions include serine 9 and 44-45; that span reads TQ. Aspartate 111, glutamate 148, and lysine 181 together coordinate ATP. Aspartate 222 contacts substrate.

It belongs to the pyridoxine kinase family. PdxY subfamily. In terms of assembly, homodimer. Mg(2+) serves as cofactor.

It carries out the reaction pyridoxal + ATP = pyridoxal 5'-phosphate + ADP + H(+). The protein operates within cofactor metabolism; pyridoxal 5'-phosphate salvage; pyridoxal 5'-phosphate from pyridoxal: step 1/1. In terms of biological role, pyridoxal kinase involved in the salvage pathway of pyridoxal 5'-phosphate (PLP). Catalyzes the phosphorylation of pyridoxal to PLP. This chain is Pyridoxal kinase PdxY, found in Actinobacillus pleuropneumoniae serotype 5b (strain L20).